A 365-amino-acid polypeptide reads, in one-letter code: 3-dehydroquinate synthase (365 aa).

NAD(+) is bound by residues 69-74 (DGEAHK), 103-107 (GVIGD), 127-128 (TT), Lys140, and Lys149. Zn(2+) is bound by residues Glu182, His245, and His262.

It belongs to the sugar phosphate cyclases superfamily. Dehydroquinate synthase family. Co(2+) is required as a cofactor. Requires Zn(2+) as cofactor. The cofactor is NAD(+).

It localises to the cytoplasm. It carries out the reaction 7-phospho-2-dehydro-3-deoxy-D-arabino-heptonate = 3-dehydroquinate + phosphate. It functions in the pathway metabolic intermediate biosynthesis; chorismate biosynthesis; chorismate from D-erythrose 4-phosphate and phosphoenolpyruvate: step 2/7. Functionally, catalyzes the conversion of 3-deoxy-D-arabino-heptulosonate 7-phosphate (DAHP) to dehydroquinate (DHQ). This is 3-dehydroquinate synthase from Pseudomonas putida (strain ATCC 700007 / DSM 6899 / JCM 31910 / BCRC 17059 / LMG 24140 / F1).